We begin with the raw amino-acid sequence, 152 residues long: Ribosomal RNA large subunit methyltransferase H (152 aa).

S-adenosyl-L-methionine contacts are provided by residues L70, G102, and 120–125 (LSPMTF).

Belongs to the RNA methyltransferase RlmH family. Homodimer.

The protein localises to the cytoplasm. It catalyses the reaction pseudouridine(1915) in 23S rRNA + S-adenosyl-L-methionine = N(3)-methylpseudouridine(1915) in 23S rRNA + S-adenosyl-L-homocysteine + H(+). Specifically methylates the pseudouridine at position 1915 (m3Psi1915) in 23S rRNA. This Pelobacter propionicus (strain DSM 2379 / NBRC 103807 / OttBd1) protein is Ribosomal RNA large subunit methyltransferase H.